The following is an 814-amino-acid chain: MFAKRKPEPAKRRQHNLAQFGLTEIPDDFDPTSGYGDDDGGDSDLEAELAALASGGGQRPKAKPKPKLMPTSDLDKMIADSLRDVSDDDDDENLENDSDLLGELHGIGGLEEEPEAEEAAAEPAASEEEPVQTFLPTTTVDTLGIIKQRLEIYKQAEANAKASGDSGKARRFGRGLKTLQDLHKQAAAGKTINVDDIPPEVSVKPAGDPSPAADESPAPSTPVSQPTRVAPAPPTPTSPPAATPPPAPATPPNPLVAQMRSRQSEYKAAALQYKRSGDTANALQFLKVVKQFDVVVKMCEDGQEVDLSDMPPPPSEFLEFLAKMKGEAAPEVVTAPEPTPAPAPATPPAAAAAAESMLEALQRRLEKYKSVEAAAKAEENTGKARRFGRIVKQYEDAIKQYKAGKPVAYDELPVPPGFGPLPSTEPAPAATPSLPTSPTSPPATASTSAGGTPSGSSATTPTVPRKAAPSPPQPTELTTRVTGNHQKSNLAEQQMKLLLERQKEFKVAAIEAKKAGEIDQAKEYLKIYKGFDSLLNAASSGLPVDLSTLPVPPSQRDNLEASFAIVSAEECDPSDDICEIGVRMEEQLAKQLMMCKNTRDHHKAMGDVAGMNRFENLALTVQKDLDVVRYSKRKGQPLPKFHYEKRNFNIVHCNTDLTDNELEIVVARGINYNVPNPKEVDTYVRVEFPLLNDESFKTKTNVIKDTNSPDYDERFKVDIQRSNRQFQRIFKRHGVKLEIYSRGGFLRSDILIGTVNVKLQPLETKCDIHDTYDLMDGRKQVGGKLEVKVRVRNPILTKQIEHINEKWLVLDAEG.

Residues M1–K11 are compositionally biased toward basic and acidic residues. Disordered stretches follow at residues M1–P136 and E157–Q263. A compositionally biased stretch (acidic residues) spans I25–A47. Residues D73–V85 are compositionally biased toward basic and acidic residues. Acidic residues-rich tracts occupy residues S86–L100 and L110–P130. Residues L143 to V201 are DM14 1. Residues P205–A230 show a composition bias toward low complexity. The segment covering P231–P254 has biased composition (pro residues). DM14 stretches follow at residues V256–P314 and L358–P416. The stretch at A351–E378 forms a coiled coil. The span at V414–E425 shows a compositional bias: pro residues. Positions V414–Q486 are disordered. Positions P426 to T462 are enriched in low complexity. Positions T475–Q486 are enriched in polar residues. The DM14 4 stretch occupies residues M495–P553. Residues R633–Y772 enclose the C2 domain.

This sequence belongs to the CC2D1 family. Interacts (via DM14 domains 1 and 3) with shrb; the interaction is direct and blocks access to the surface involved in shrb polymerization. This interaction may be required for the ESCRT-III complex role in multivesicular body formation.

Its subcellular location is the cytoplasm. The protein localises to the cytosol. The protein resides in the apicolateral cell membrane. It localises to the cell cortex. It is found in the endosome. Phosphatidyl inositol monophosphate binding protein involved in endosomal protein sorting through regulation of the endosomal sorting required for transport (ESCRT) pathway. Required for full activity of the ESCRT-III complex core component shrb/shrub, probably by preventing its inappropriate polymerisation. Required, but not essential, for the efficient generation of intraluminal vesicles (ILVs) in multivesicular bodies (MVBs). Involved in a late stage of the endosomal pathway targeting transmembrane proteins of the plasma membrane for lysosomal degradation. Plays a critical role in regulation of multiple signal transduction pathways, including the Notch and BMP/decapentaplegic (dpp) signaling pathways, through targeting of membrane bound receptors to multivesicular bodies, isolating them from the cytoplasm and targeting them for lysosomal degradation. Involved in targeting N/Notch for endosomal degradation, negatively regulating the Notch signaling pathway. Regulates Notch signaling in imaginal disk cells and follicle cells during oogenesis and multiple developmental processes, including development of wings, veins, legs, eyes and bristles. Restricts the activity of Notch to the dorsoventral (D/V) boundary of the wing imaginal disk. In external sensory organ development regulates Notch signaling during asymmetric cell division and differentiation of sensory organ precursor cells. May be involved in regulation of apoptosis and cell growth independent of Notch signaling. Involved in targeting tkv for endosomal degradation, negatively regulating the BMP/decapentaplegic (dpp) signaling pathway. Regulates the BMP/dpp signaling pathway in follicle cells during oogenesis, but not in imaginal disk cells during wing development. May be involved in differentiation or morphogenesis of peripodial epithelial cells in the developing imaginal disk. Involved in abscission of germline cells during oogenesis. In Drosophila pseudoobscura pseudoobscura (Fruit fly), this protein is Coiled-coil and C2 domain-containing protein 1-like.